Reading from the N-terminus, the 189-residue chain is Probable nicotinate-nucleotide adenylyltransferase (189 aa).

The protein belongs to the NadD family.

The enzyme catalyses nicotinate beta-D-ribonucleotide + ATP + H(+) = deamido-NAD(+) + diphosphate. The protein operates within cofactor biosynthesis; NAD(+) biosynthesis; deamido-NAD(+) from nicotinate D-ribonucleotide: step 1/1. In terms of biological role, catalyzes the reversible adenylation of nicotinate mononucleotide (NaMN) to nicotinic acid adenine dinucleotide (NaAD). The sequence is that of Probable nicotinate-nucleotide adenylyltransferase from Ruegeria sp. (strain TM1040) (Silicibacter sp.).